Here is a 345-residue protein sequence, read N- to C-terminus: Ubiquitin-associated domain-containing protein 2 (345 aa).

The N-terminal stretch at 1–39 (MFTSTGSSGLYKAPLSKSLLLVPSALSLLLTLLLPHCQK) is a signal peptide. The Extracellular segment spans residues 40–91 (FFVYDLHAVKHDLQIWRLICGRIICLDLKDAFCSGLLIYNFRIFERRYGSRK). A helical transmembrane segment spans residues 92–112 (FASFLLGSWVLSALFDFILVE). The Cytoplasmic portion of the chain corresponds to 113-125 (AVQYSLGVTVASN). Residues 126–146 (LPSGFLAPVFALFVPFHCSIP) form a helical membrane-spanning segment. Over 147 to 163 (RVQVAQILGPLSITNKT) the chain is Extracellular. N-linked (GlcNAc...) asparagine glycosylation occurs at asparagine 161. The chain crosses the membrane as a helical span at residues 164 to 184 (LIYILGLQLFTSGSYIWIVAM). The Cytoplasmic segment spans residues 185-345 (SGLISGMCYD…NVATNFLLQH (161 aa)). A disordered region spans residues 287–306 (NINYQDGPRSEQRASPPLEV). The UBA domain maps to 305-345 (EVSEEQVARLMEMGFSRGDALEALRASNNDLNVATNFLLQH).

In terms of assembly, interacts with LMBR1L, FAF2, AMFR and VCP.

It localises to the endoplasmic reticulum membrane. Functionally, restricts trafficking of FAF2 from the endoplasmic reticulum to lipid droplets. In association with LMBR1L and E3 ubiquitin-protein ligase AMFR, negatively regulates the canonical Wnt signaling pathway in the lymphocytes by promoting the ubiquitin-mediated degradation of CTNNB1 and Wnt receptors FZD6 and LRP6. In Mus musculus (Mouse), this protein is Ubiquitin-associated domain-containing protein 2 (Ubac2).